Consider the following 849-residue polypeptide: Villin-1 (849 aa).

Gelsolin-like repeat units follow at residues 30-107 (IEKS…DKFL), 147-213 (RVTE…EDGK), 262-335 (VPVE…TVEF), 405-475 (QEQL…PEMF), and 527-566 (AIQV…DHNL). A disordered region spans residues 739-849 (ETPERSLRKS…AVATGTPRRL (111 aa)). Low complexity-rich tracts occupy residues 747–782 (KSSS…SAST) and 791–823 (PAAL…STPS).

The protein belongs to the villin/gelsolin family.

The protein resides in the cytoplasm. It localises to the cytoskeleton. In terms of biological role, ca(2+)-independent actin-binding protein. Binds actin microfilaments (MFs). Involved in actin filament bundling, severing and capping. Caps the barbed end of actin filaments and protects them from disassembly. Promotes VLN3-mediated MF severing. The polypeptide is Villin-1 (Oryza sativa subsp. indica (Rice)).